The sequence spans 101 residues: Protein RADIALIS-like 2 (101 aa).

The SANT domain occupies 9 to 64; the sequence is YGSGSWTVKQNKAFERALAVYDQDTPDRWHNVARAVGGKTPEEAKRQYDLLVRDIE. A disordered region spans residues 69–101; the sequence is GHVPFPDYKTTTGNSNRGRLRDEEKRMRSMKLQ.

As to expression, expressed in the funiculus of ovules and in embryos. In young ovules, expression is observed in the adaxial side of the funiculus (the stalk connecting the embryo sac to the placenta). Also expressed in heart-stage embryos, in the cortex and endodermis of the hypocotyl region but not in the cotyledons, shoot and root apical meristems, provasculature or epidermis. Not detected in young seedlings, mature roots or in young floral primordia.

The protein localises to the nucleus. Its function is as follows. Probable transcription factor. Required for female gametophyte development. This chain is Protein RADIALIS-like 2 (RL2), found in Arabidopsis thaliana (Mouse-ear cress).